The following is a 426-amino-acid chain: Proline--tRNA ligase (426 aa).

This sequence belongs to the class-II aminoacyl-tRNA synthetase family. ProS type 2 subfamily. As to quaternary structure, homodimer.

The protein resides in the cytoplasm. The enzyme catalyses tRNA(Pro) + L-proline + ATP = L-prolyl-tRNA(Pro) + AMP + diphosphate. Catalyzes the attachment of proline to tRNA(Pro) in a two-step reaction: proline is first activated by ATP to form Pro-AMP and then transferred to the acceptor end of tRNA(Pro). This chain is Proline--tRNA ligase, found in Ehrlichia ruminantium (strain Gardel).